The chain runs to 233 residues: MAGKRTQKINEGVDPTKLYALTLAIGMVKERAVAKFDETIEVSMNLGVDPRHADQMVRGVVNLPNGTGRTVRVAVFARGAKADEAKAAGADIVGAEDLVEIVQGGKIEFDRCIATPDMMPLVGRLGKVLGPRGMMPNPKVGTVTMDVAGAVKASKGGAVEFRVEKAGIVHAGIGKASFDAKALEENIRAFADAVIKAKPAGAKGNYVKRVAISSTMGPGVKIEPGSVTGAPAA.

The protein belongs to the universal ribosomal protein uL1 family. Part of the 50S ribosomal subunit.

Its function is as follows. Binds directly to 23S rRNA. The L1 stalk is quite mobile in the ribosome, and is involved in E site tRNA release. Functionally, protein L1 is also a translational repressor protein, it controls the translation of the L11 operon by binding to its mRNA. This is Large ribosomal subunit protein uL1 from Rhizobium johnstonii (strain DSM 114642 / LMG 32736 / 3841) (Rhizobium leguminosarum bv. viciae).